Reading from the N-terminus, the 323-residue chain is Cobalamin biosynthesis protein CobD (323 aa).

Helical transmembrane passes span 52–72 (IAGVLLLALTVTSAASVTWLM), 73–93 (VWGSARLHALAGLMVAALLSS), 154–174 (DGIIAPLFWLALGGPVAGMAF), 214–234 (ALLMVMVAPLIGLSQANAASI), and 294–314 (IRLMYATTLAMAVISLATAAL).

This sequence belongs to the CobD/CbiB family.

The protein localises to the cell membrane. The protein operates within cofactor biosynthesis; adenosylcobalamin biosynthesis. Its function is as follows. Converts cobyric acid to cobinamide by the addition of aminopropanol on the F carboxylic group. This is Cobalamin biosynthesis protein CobD from Pelobacter propionicus (strain DSM 2379 / NBRC 103807 / OttBd1).